The chain runs to 143 residues: Adrenodoxin, mitochondrial (143 aa).

A mitochondrion-targeting transit peptide spans 1-19; sequence CSAVAVRTLRPLSLSARAA. The 2Fe-2S ferredoxin-type domain occupies 26 to 130; the sequence is ITVHFINRDG…NMTVRVPEAV (105 aa). Residues Cys65, Cys71, Cys74, and Cys111 each contribute to the [2Fe-2S] cluster site.

It belongs to the adrenodoxin/putidaredoxin family. [2Fe-2S] cluster is required as a cofactor.

Its subcellular location is the mitochondrion matrix. Functionally, essential for the synthesis of various steroid hormones. Participates in the reduction of mitochondrial cytochrome P450 for steroidogenesis. Transfers electrons from adrenodoxin reductase to CYP11A1, a cytochrome P450 that catalyzes cholesterol side-chain cleavage. Does not form a ternary complex with adrenodoxin reductase and CYP11A1 but shuttles between the two enzymes to transfer electrons. The sequence is that of Adrenodoxin, mitochondrial (FDX1) from Gallus gallus (Chicken).